Here is a 442-residue protein sequence, read N- to C-terminus: Small RNA 2'-O-methyltransferase (442 aa).

S-adenosyl-L-methionine-binding residues include Gly-125 and Asp-151. The Mg(2+) site is built by Glu-209, Glu-212, His-213, and His-260.

This sequence belongs to the methyltransferase superfamily. HEN1 family. Requires Mg(2+) as cofactor. In terms of tissue distribution, broadly expressed in the germline and somatic tissues in both hermaphrodites and males.

The protein localises to the cytoplasm. Its subcellular location is the nucleus. It is found in the nucleoplasm. The protein resides in the cytoplasmic granule. It catalyses the reaction small RNA 3'-end nucleotide + S-adenosyl-L-methionine = small RNA 3'-end 2'-O-methylnucleotide + S-adenosyl-L-homocysteine + H(+). Functionally, methyltransferase that adds a 2'-O-methyl group at the 3'-end of PIWI-interacting RNAs (piRNAs) and small interfering RNAs (siRNAs) which are classes of regulatory RNAs that are involved in gene silencing in endogenous RNA interference (RNAi) pathways. Methylation protects the 3'-end of small RNAs from tailing and trimming and could constitute a recognition signal for appropriate argonaute machineries. Methylates and stabilizes 26G-siRNAs (a class of 26 nucleotide siRNAs that possess a monophosphorylated guanine residue at the 5'-end) when they are bound by argonaute protein ergo-1. This occurs in the female germline and embryo, but not in the male germline. Does not methylate 26G-siRNAs bound by argonaute proteins alg-3 or alg-4. Methylates and stabilizes 21U-piRNAs, which are a class of 21 nucleotide piRNAs that possess a uracil residue at the 5'-end, in the male and female germline. In addition, may play a role in exogenous RNAi (exoRNAi) pathways in the germline. The sequence is that of Small RNA 2'-O-methyltransferase from Caenorhabditis elegans.